Here is a 422-residue protein sequence, read N- to C-terminus: Glutamate-1-semialdehyde 2,1-aminomutase (422 aa).

An N6-(pyridoxal phosphate)lysine modification is found at Lys258.

This sequence belongs to the class-III pyridoxal-phosphate-dependent aminotransferase family. HemL subfamily. Homodimer. Pyridoxal 5'-phosphate serves as cofactor.

The protein resides in the cytoplasm. It catalyses the reaction (S)-4-amino-5-oxopentanoate = 5-aminolevulinate. Its pathway is porphyrin-containing compound metabolism; protoporphyrin-IX biosynthesis; 5-aminolevulinate from L-glutamyl-tRNA(Glu): step 2/2. This Chlamydia muridarum (strain MoPn / Nigg) protein is Glutamate-1-semialdehyde 2,1-aminomutase.